The following is a 463-amino-acid chain: 23S rRNA (uracil(1939)-C(5))-methyltransferase RlmD (463 aa).

One can recognise a TRAM domain in the interval 6–76 (KSRKPQQPEY…KRLEEAEMVE (71 aa)). [4Fe-4S] cluster is bound by residues cysteine 90, cysteine 96, cysteine 99, and cysteine 178. S-adenosyl-L-methionine contacts are provided by glutamine 288, phenylalanine 317, asparagine 322, glutamate 341, aspartate 368, and aspartate 389. Cysteine 415 functions as the Nucleophile in the catalytic mechanism.

Belongs to the class I-like SAM-binding methyltransferase superfamily. RNA M5U methyltransferase family. RlmD subfamily.

The catalysed reaction is uridine(1939) in 23S rRNA + S-adenosyl-L-methionine = 5-methyluridine(1939) in 23S rRNA + S-adenosyl-L-homocysteine + H(+). Catalyzes the formation of 5-methyl-uridine at position 1939 (m5U1939) in 23S rRNA. In Acinetobacter baumannii (strain AYE), this protein is 23S rRNA (uracil(1939)-C(5))-methyltransferase RlmD.